The sequence spans 173 residues: Dual-action ribosomal maturation protein DarP (173 aa).

This sequence belongs to the DarP family.

It is found in the cytoplasm. Member of a network of 50S ribosomal subunit biogenesis factors which assembles along the 30S-50S interface, preventing incorrect 23S rRNA structures from forming. Promotes peptidyl transferase center (PTC) maturation. This Pseudomonas putida (strain GB-1) protein is Dual-action ribosomal maturation protein DarP.